The primary structure comprises 290 residues: Dehydrodolichyl diphosphate synthase CPT3 (290 aa).

Residue Asp-42 is part of the active site.

Belongs to the UPP synthase family. The cofactor is Mg(2+). In terms of tissue distribution, expressed in leaf trichomes and stem trichomes. Expressed at low levels in young leaves, stems and old leaves.

The protein resides in the cytoplasm. Its subcellular location is the cytosol. The enzyme catalyses n isopentenyl diphosphate + (2E,6E)-farnesyl diphosphate = a di-trans,poly-cis-polyprenyl diphosphate + n diphosphate. Functionally, catalyzes cis-prenyl chain elongation to produce the polyprenyl backbone of dolichol, a glycosyl carrier-lipid required for the biosynthesis of several classes of glycoprotein. The protein is Dehydrodolichyl diphosphate synthase CPT3 of Solanum lycopersicum (Tomato).